A 40-amino-acid chain; its full sequence is Sarcotoxin-1D (40 aa).

Belongs to the cecropin family.

The protein localises to the secreted. In terms of biological role, sarcotoxins, which are potent bactericidal proteins, are produced in response to injury. They are cytotoxic to both Gram-positive and Gram-negative bacteria. This chain is Sarcotoxin-1D, found in Sarcophaga peregrina (Flesh fly).